A 350-amino-acid chain; its full sequence is MEPKRIREGYLVKKGSVFNTWKPMWVVLLEDGIEFYKKKSDNNPKGMIPLKGSTLTSPCQDFGKRMFVLKITTTKQQDHFFQAAYLEERDAWVRDIKKAIKCIEGGQKFARKSTRRSIRLPETIDLGALYLSMKDPEKGIKELNLEKDKKVFNHCFTGSGVIDWLVSNKLVRNRQEGLMISASLLSEGYLQPASDLSKNAADGIAENPFLDNPDAFYYFPDSGFFCEENSSDDDIILKEEFRGIIIKQGCLLKQGHRRKNWKVRKFILREDPAYLHYYDPAGGEDPLGAIHLRGCVVTSVESNPDGKKSDEENLFEIITADEVHYYMQAATAKERTEWIKAIQVASRTGK.

The region spanning 4-101 (KRIREGYLVK…WVRDIKKAIK (98 aa)) is the PH 1 domain. Residue K64 is modified to N6-acetyllysine. 2 positions are modified to phosphoserine: S113 and S117. The region spanning 136–221 (PEKGIKELNL…NPDAFYYFPD (86 aa)) is the DEP domain. The 104-residue stretch at 244–347 (IIIKQGCLLK…WIKAIQVASR (104 aa)) folds into the PH 2 domain.

In terms of biological role, major protein kinase C substrate of platelets. The sequence is that of Pleckstrin (Plek) from Rattus norvegicus (Rat).